We begin with the raw amino-acid sequence, 231 residues long: NADH-ubiquinone oxidoreductase chain 4 (231 aa).

The next 6 membrane-spanning stretches (helical) occupy residues 1–21, 34–54, 63–85, 89–111, 124–146, and 169–189; these read PIAGSMVLAAILLKLGGYGII, LFLPFIVLALWGAILANLTCL, IAYSSISHMGLVVAAIIIQTPWG, AMALMIAHGFTSSALFCLANMTY, GLHNTLPMATTWWLMTNLMNIAI, and TIIILGLSMLITASYSLHMFL.

The protein belongs to the complex I subunit 4 family.

The protein resides in the mitochondrion membrane. It catalyses the reaction a ubiquinone + NADH + 5 H(+)(in) = a ubiquinol + NAD(+) + 4 H(+)(out). In terms of biological role, core subunit of the mitochondrial membrane respiratory chain NADH dehydrogenase (Complex I) that is believed to belong to the minimal assembly required for catalysis. Complex I functions in the transfer of electrons from NADH to the respiratory chain. The immediate electron acceptor for the enzyme is believed to be ubiquinone. The sequence is that of NADH-ubiquinone oxidoreductase chain 4 (MT-ND4) from Crotalus lepidus (Banded rock rattlesnake).